Consider the following 233-residue polypeptide: uncharacterized protein (233 aa).

Belongs to the asfivirus H233R family.

This is an uncharacterized protein from African swine fever virus (strain Badajoz 1971 Vero-adapted) (Ba71V).